A 145-amino-acid chain; its full sequence is Basic phospholipase A2 PC10 (145 aa).

An N-terminal signal peptide occupies residues 1–21 (MYPAHLLLLLAVCVSLLGASA). Residues 22–27 (IPPLPL) constitute a propeptide that is removed on maturation. 7 cysteine pairs are disulfide-bonded: Cys38–Cys98, Cys54–Cys144, Cys56–Cys72, Cys71–Cys125, Cys78–Cys118, Cys87–Cys111, and Cys105–Cys116. The Ca(2+) site is built by Tyr55, Gly57, and Gly59. Residue His75 is part of the active site. Asp76 is a Ca(2+) binding site. The active site involves Asp119.

This sequence belongs to the phospholipase A2 family. Group I subfamily. D49 sub-subfamily. Requires Ca(2+) as cofactor.

The protein localises to the secreted. The catalysed reaction is a 1,2-diacyl-sn-glycero-3-phosphocholine + H2O = a 1-acyl-sn-glycero-3-phosphocholine + a fatty acid + H(+). In terms of biological role, PLA2 catalyzes the calcium-dependent hydrolysis of the 2-acyl groups in 3-sn-phosphoglycerides. This Laticauda laticaudata (Blue-ringed sea krait) protein is Basic phospholipase A2 PC10.